A 103-amino-acid chain; its full sequence is Co-chaperonin GroES (103 aa).

The protein belongs to the GroES chaperonin family. Heptamer of 7 subunits arranged in a ring. Interacts with the chaperonin GroEL.

Its subcellular location is the cytoplasm. Together with the chaperonin GroEL, plays an essential role in assisting protein folding. The GroEL-GroES system forms a nano-cage that allows encapsulation of the non-native substrate proteins and provides a physical environment optimized to promote and accelerate protein folding. GroES binds to the apical surface of the GroEL ring, thereby capping the opening of the GroEL channel. The polypeptide is Co-chaperonin GroES (Crocosphaera subtropica (strain ATCC 51142 / BH68) (Cyanothece sp. (strain ATCC 51142))).